The primary structure comprises 359 residues: Insulin gene enhancer protein ISL-2 (359 aa).

LIM zinc-binding domains lie at 25–86 (AMCV…RLFG) and 87–149 (IKCA…LLER). The interval 151 to 191 (AAGSPRSPGPLPGARGLHLPDAGSGRQPALRPHVHKQTEKT) is disordered. A phosphoserine mark is found at Ser-154 and Ser-157. Positions 191-250 (TTRVRTVLNEKQLHTLRTCYAANPRPDALMKEQLVEMTGLSPRVIRVWFQNKRCKDKKKS) form a DNA-binding region, homeobox. The LIM-binding domain (LID) stretch occupies residues 272 to 301 (GTPLVAGSPIRHENAVQGSAVEVQTYQPPW). Position 279 is a phosphoserine (Ser-279). A compositionally biased stretch (low complexity) spans 326 to 336 (ESGSLGNSSGS). The interval 326–359 (ESGSLGNSSGSDVTSLSSQLPDTPNSMVPSPVET) is disordered. Residues 337-359 (DVTSLSSQLPDTPNSMVPSPVET) are compositionally biased toward polar residues.

Interacts with LHX4.

It is found in the nucleus. Transcriptional factor that defines subclasses of motoneurons that segregate into columns in the spinal cord and select distinct axon pathways. The polypeptide is Insulin gene enhancer protein ISL-2 (ISL2) (Homo sapiens (Human)).